The sequence spans 381 residues: Fe-S cluster assembly protein DRE2 (381 aa).

The tract at residues 8–165 is N-terminal SAM-like domain; sequence AQGSGRFLLL…KPDFGAQQAV (158 aa). The segment at 100 to 134 is disordered; sequence RNRDNQIWGSGSDSAAGLGSSDGDGGGGEKMSSSE. Residues 108–118 show a composition bias toward low complexity; sequence GSGSDSAAGLG. Residues 119–128 are compositionally biased toward gly residues; it reads SSDGDGGGGE. The linker stretch occupies residues 166 to 273; that stretch reads PLKLGRKKNL…EEELLGEYDM (108 aa). The [2Fe-2S] cluster site is built by Cys283, Cys294, Cys297, and Cys299. Positions 283 to 299 are fe-S binding site A; it reads CRPKAGKRRRACKDCTC. [4Fe-4S] cluster-binding residues include Cys344, Cys347, Cys355, and Cys358. 2 short sequence motifs (cx2C motif) span residues 344 to 347 and 355 to 358; these read CGNC and CDGC. The segment at 344-358 is fe-S binding site B; that stretch reads CGNCALGDAFRCDGC.

This sequence belongs to the anamorsin family. Monomer. Interacts with TAH18. Interacts with MIA40. [2Fe-2S] cluster serves as cofactor. [4Fe-4S] cluster is required as a cofactor.

The protein localises to the cytoplasm. It localises to the mitochondrion intermembrane space. In terms of biological role, component of the cytosolic iron-sulfur (Fe-S) protein assembly (CIA) machinery required for the maturation of extramitochondrial Fe-S proteins. Part of an electron transfer chain functioning in an early step of cytosolic Fe-S biogenesis, facilitating the de novo assembly of a [4Fe-4S] cluster on the scaffold complex CFD1-NBP35. Electrons are transferred to DRE2 from NADPH via the FAD- and FMN-containing protein TAH18. TAH18-DRE2 are also required for the assembly of the diferric tyrosyl radical cofactor of ribonucleotide reductase (RNR), probably by providing electrons for reduction during radical cofactor maturation in the catalytic small subunit RNR2. This chain is Fe-S cluster assembly protein DRE2, found in Paracoccidioides brasiliensis (strain Pb18).